The primary structure comprises 213 residues: Orotate phosphoribosyltransferase (213 aa).

A 5-phospho-alpha-D-ribose 1-diphosphate-binding site is contributed by Lys26. Residue 34-35 (FF) participates in orotate binding. 5-phospho-alpha-D-ribose 1-diphosphate is bound by residues 72–73 (YK), Arg99, Lys100, Lys103, His105, and 124–132 (DDVITAGTA). Thr128 and Arg156 together coordinate orotate.

This sequence belongs to the purine/pyrimidine phosphoribosyltransferase family. PyrE subfamily. As to quaternary structure, homodimer. It depends on Mg(2+) as a cofactor.

The enzyme catalyses orotidine 5'-phosphate + diphosphate = orotate + 5-phospho-alpha-D-ribose 1-diphosphate. Its pathway is pyrimidine metabolism; UMP biosynthesis via de novo pathway; UMP from orotate: step 1/2. Catalyzes the transfer of a ribosyl phosphate group from 5-phosphoribose 1-diphosphate to orotate, leading to the formation of orotidine monophosphate (OMP). This Haemophilus influenzae (strain 86-028NP) protein is Orotate phosphoribosyltransferase.